Consider the following 68-residue polypeptide: Protein SrnB (68 aa).

A helical transmembrane segment spans residues 23–42; that stretch reads YALIGLLAVCATVLCFSLIF.

This sequence belongs to the Hok/Gef family.

The protein localises to the cell inner membrane. Functionally, toxic component of a type I toxin-antitoxin (TA) system. Its normal function is believed to be effective plasmid stabilization through postsegregational killing of cells that have lost the F plasmid. Promotes degradation of stable RNA in E.coli. This chain is Protein SrnB (srnB), found in Escherichia coli (strain K12).